The primary structure comprises 345 residues: sn-glycerol-3-phosphate import ATP-binding protein UgpC (345 aa).

The region spanning 4 to 235 (IQLLNIKKQY…PKTIFVADFI (232 aa)) is the ABC transporter domain. 37–44 (GPSGCGKS) serves as a coordination point for ATP.

This sequence belongs to the ABC transporter superfamily. sn-glycerol-3-phosphate importer (TC 3.A.1.1.3) family. In terms of assembly, the complex is composed of two ATP-binding proteins (UgpC), two transmembrane proteins (UgpA and UgpE) and a solute-binding protein (UgpB).

It localises to the cell inner membrane. It carries out the reaction sn-glycerol 3-phosphate(out) + ATP + H2O = sn-glycerol 3-phosphate(in) + ADP + phosphate + H(+). In terms of biological role, part of the ABC transporter complex UgpBAEC involved in sn-glycerol-3-phosphate (G3P) import. Responsible for energy coupling to the transport system. The chain is sn-glycerol-3-phosphate import ATP-binding protein UgpC from Bartonella bacilliformis (strain ATCC 35685 / KC583 / Herrer 020/F12,63).